The chain runs to 765 residues: 5-methyltetrahydropteroyltriglutamate--homocysteine methyltransferase (765 aa).

5-methyltetrahydropteroyltri-L-glutamate-binding residues include Lys18 and Asn116. Residues 437–439 (IGS) and Glu490 each bind L-homocysteine. L-methionine contacts are provided by residues 437 to 439 (IGS) and Glu490. 5-methyltetrahydropteroyltri-L-glutamate contacts are provided by residues Asp495, Tyr518, 521-522 (RC), and Trp567. Asp605 contacts L-homocysteine. An L-methionine-binding site is contributed by Asp605. 5 residues coordinate Zn(2+): His647, Cys649, His658, Asp662, and Glu671. Catalysis depends on His701, which acts as the Proton donor. A Zn(2+)-binding site is contributed by Cys733.

Belongs to the vitamin-B12 independent methionine synthase family. The cofactor is Zn(2+).

Its subcellular location is the cytoplasm. It catalyses the reaction 5-methyltetrahydropteroyltri-L-glutamate + L-homocysteine = tetrahydropteroyltri-L-glutamate + L-methionine. It functions in the pathway amino-acid biosynthesis; L-methionine biosynthesis via de novo pathway; L-methionine from L-homocysteine (MetE route): step 1/1. Functionally, catalyzes the transfer of a methyl group from 5-methyltetrahydrofolate to homocysteine resulting in methionine formation. This chain is 5-methyltetrahydropteroyltriglutamate--homocysteine methyltransferase (METE), found in Mesembryanthemum crystallinum (Common ice plant).